A 1671-amino-acid polypeptide reads, in one-letter code: Hybrid signal transduction protein dokA (1671 aa).

A compositionally biased stretch (basic and acidic residues) spans 1–10 (MSSPHIELHS). Disordered regions lie at residues 1–27 (MSSP…ELTG), 42–89 (DDLN…DKND), 126–241 (QQQQ…RRSS), 365–451 (YSNN…NNEE), 579–603 (HNHN…SPFI), and 629–651 (SNSS…SSNA). Over residues 11–27 (QRTLSPQPSSNNFELTG) the composition is skewed to polar residues. Low complexity-rich tracts occupy residues 45–83 (NNNN…NNNN) and 126–167 (QQQQ…QQQE). Residues 168 to 179 (QEQEQEQEQEQE) show a composition bias toward acidic residues. The segment covering 367–449 (NNNNNTNTNN…NNNNNNNNNN (83 aa)) has biased composition (low complexity). Residues 591–600 (TTQRASSTDS) show a composition bias toward polar residues. The Histidine kinase domain maps to 1050 to 1276 (NISHELRTPC…TFWFAIKVSI (227 aa)). A Response regulatory domain is found at 1519-1633 (YILVAEDNDI…RLQKTLSDWI (115 aa)).

Post-translationally, under osmotic stress conditions, this protein undergoes phosphorylation at a serine residue in the kinase core, which is not due to an autophosphorylation of dokA. This is in contrast to the classic two-component paradigm, which predicts only histidine and aspartate phosphorylation.

In terms of biological role, part of the osmoregulatory pathway which leads to the increase of intracellular cAMP concentration in response to hyperosmotic stress. Thought to negatively regulate the rdeA-regA pathway by acting as a phosphatase towards the HPt protein rdeA. Has probably no histidine kinase activity. The protein is Hybrid signal transduction protein dokA (dokA) of Dictyostelium discoideum (Social amoeba).